Reading from the N-terminus, the 319-residue chain is Probable casein kinase II subunit alpha homolog (319 aa).

One can recognise a Protein kinase domain in the interval Y37–F316. Residues M43–V51 and K64 each bind ATP. The active-site Proton acceptor is the D151.

This sequence belongs to the protein kinase superfamily. Ser/Thr protein kinase family. CK2 subfamily. As to quaternary structure, tetramer composed of two alpha chains, one beta chain and one beta' chain.

It carries out the reaction L-seryl-[protein] + ATP = O-phospho-L-seryl-[protein] + ADP + H(+). The enzyme catalyses L-threonyl-[protein] + ATP = O-phospho-L-threonyl-[protein] + ADP + H(+). Its function is as follows. Catalytic subunit of a constitutively active serine/threonine-protein kinase complex that phosphorylates a large number of substrates containing acidic residues C-terminal to the phosphorylated serine or threonine. This is Probable casein kinase II subunit alpha homolog (CKA1) from Encephalitozoon cuniculi (strain GB-M1) (Microsporidian parasite).